Reading from the N-terminus, the 371-residue chain is 3-dehydroquinate synthase (371 aa).

Residues 70–75, 104–108, 128–129, lysine 141, and lysine 150 each bind NAD(+); these read DAEDGK, GAVTD, and TT. Residues glutamate 183, histidine 246, and histidine 262 each contribute to the Zn(2+) site.

It belongs to the sugar phosphate cyclases superfamily. Dehydroquinate synthase family. Co(2+) serves as cofactor. Zn(2+) is required as a cofactor. Requires NAD(+) as cofactor.

It localises to the cytoplasm. The catalysed reaction is 7-phospho-2-dehydro-3-deoxy-D-arabino-heptonate = 3-dehydroquinate + phosphate. It functions in the pathway metabolic intermediate biosynthesis; chorismate biosynthesis; chorismate from D-erythrose 4-phosphate and phosphoenolpyruvate: step 2/7. Catalyzes the conversion of 3-deoxy-D-arabino-heptulosonate 7-phosphate (DAHP) to dehydroquinate (DHQ). The polypeptide is 3-dehydroquinate synthase (Saccharopolyspora erythraea (strain ATCC 11635 / DSM 40517 / JCM 4748 / NBRC 13426 / NCIMB 8594 / NRRL 2338)).